The chain runs to 161 residues: Nucleotide-binding protein XAC3671 (161 aa).

This sequence belongs to the YajQ family.

Nucleotide-binding protein. This Xanthomonas axonopodis pv. citri (strain 306) protein is Nucleotide-binding protein XAC3671.